Consider the following 204-residue polypeptide: Urease accessory protein UreG (204 aa).

A GTP-binding site is contributed by 13 to 20 (GPVGSGKT).

This sequence belongs to the SIMIBI class G3E GTPase family. UreG subfamily. As to quaternary structure, homodimer. UreD, UreF and UreG form a complex that acts as a GTP-hydrolysis-dependent molecular chaperone, activating the urease apoprotein by helping to assemble the nickel containing metallocenter of UreC. The UreE protein probably delivers the nickel.

The protein resides in the cytoplasm. Functionally, facilitates the functional incorporation of the urease nickel metallocenter. This process requires GTP hydrolysis, probably effectuated by UreG. This chain is Urease accessory protein UreG, found in Acinetobacter baylyi (strain ATCC 33305 / BD413 / ADP1).